We begin with the raw amino-acid sequence, 285 residues long: Glycine--tRNA ligase alpha subunit (285 aa).

The protein belongs to the class-II aminoacyl-tRNA synthetase family. Tetramer of two alpha and two beta subunits.

The protein localises to the cytoplasm. It carries out the reaction tRNA(Gly) + glycine + ATP = glycyl-tRNA(Gly) + AMP + diphosphate. This Granulibacter bethesdensis (strain ATCC BAA-1260 / CGDNIH1) protein is Glycine--tRNA ligase alpha subunit.